The chain runs to 78 residues: Alpha-amylase inhibitor Haim-1 (78 aa).

2 cysteine pairs are disulfide-bonded: C11/C27 and C45/C72.

Its function is as follows. Inhibits mammalian alpha-amylases specifically but has no action on plant and microbial alpha-amylases. The chain is Alpha-amylase inhibitor Haim-1 from Streptomyces griseosporeus.